A 499-amino-acid polypeptide reads, in one-letter code: Cytochrome P450 ARB_01131 (499 aa).

The signal sequence occupies residues methionine 1–serine 21. Asparagine 23 is a glycosylation site (N-linked (GlcNAc...) asparagine). Cysteine 437 is a binding site for heme.

Belongs to the cytochrome P450 family. It depends on heme as a cofactor.

Together with an NADPH cytochrome P450 the enzyme system catalyzes the terminal hydroxylation as the first step in the assimilation of alkanes and fatty acids. The polypeptide is Cytochrome P450 ARB_01131 (Arthroderma benhamiae (strain ATCC MYA-4681 / CBS 112371) (Trichophyton mentagrophytes)).